A 79-amino-acid polypeptide reads, in one-letter code: Small ribosomal subunit protein uS17 (79 aa).

It belongs to the universal ribosomal protein uS17 family. As to quaternary structure, part of the 30S ribosomal subunit.

In terms of biological role, one of the primary rRNA binding proteins, it binds specifically to the 5'-end of 16S ribosomal RNA. The protein is Small ribosomal subunit protein uS17 of Caulobacter sp. (strain K31).